The primary structure comprises 253 residues: HTH-type transcriptional regulator YdeO (253 aa).

The HTH araC/xylS-type domain maps to glycine 137–glutamate 233. 2 consecutive DNA-binding regions (H-T-H motif) follow at residues lysine 154–glutamine 175 and valine 200–phenylalanine 223.

Induces the expression of gadE and mdtEF. Could also regulate the expression of other genes involved in acid resistance. This Escherichia coli O6:H1 (strain CFT073 / ATCC 700928 / UPEC) protein is HTH-type transcriptional regulator YdeO (ydeO).